The following is a 469-amino-acid chain: Glutamate--tRNA ligase (469 aa).

A 'HIGH' region motif is present at residues 11 to 21 (PSPTGFIHLGN). Positions 243–247 (KMSKR) match the 'KMSKS' region motif. K246 is an ATP binding site.

It belongs to the class-I aminoacyl-tRNA synthetase family. Glutamate--tRNA ligase type 1 subfamily. As to quaternary structure, monomer.

Its subcellular location is the cytoplasm. It catalyses the reaction tRNA(Glu) + L-glutamate + ATP = L-glutamyl-tRNA(Glu) + AMP + diphosphate. In terms of biological role, catalyzes the attachment of glutamate to tRNA(Glu) in a two-step reaction: glutamate is first activated by ATP to form Glu-AMP and then transferred to the acceptor end of tRNA(Glu). In Burkholderia ambifaria (strain MC40-6), this protein is Glutamate--tRNA ligase.